A 453-amino-acid chain; its full sequence is CAAX prenyl protease 1 (453 aa).

Over 1–12 (MFDLKTILDHPN) the chain is Lumenal. The helical transmembrane segment at 13-33 (IPWKLIISGFSIAQFSFESYL) threads the bilayer. Topologically, residues 34 to 89 (TYRQYQKLSETKLPPVLEDEIDDETFHKSRNYSRAKAKFSIFGDVYNLAQKLVFIK) are cytoplasmic. The chain crosses the membrane as a helical span at residues 90 to 110 (YDLFPKIWHMAVSLLNAVLPV). The Lumenal segment spans residues 111-121 (RFHMVSTVAQS). A helical transmembrane segment spans residues 122-142 (LCFLGLLSSLSTLVDLPLSYY). At 143–167 (SHFVLEEKFGFNKLTVQLWITDMIK) the chain is on the cytoplasmic side. Residues 168-188 (SLTLAYAIGGPILYLFLKIFD) traverse the membrane as a helical segment. Residues 189–197 (KFPTDFLWY) are Lumenal-facing. Residues 198–218 (IMVFLFVVQILAMTIIPVFIM) traverse the membrane as a helical segment. Residues 219-306 (PMFNKFTPLE…HEIGHWQKNH (88 aa)) lie on the Cytoplasmic side of the membrane. H297 contributes to the Zn(2+) binding site. Residue E298 is part of the active site. Position 301 (H301) interacts with Zn(2+). The chain crosses the membrane as a helical span at residues 307-327 (IVNMVIFSQLHTFLIFSLFTS). The Lumenal segment spans residues 328-357 (IYRNTSFYNTFGFFLEKSTGSFVDPVITKE). A helical membrane pass occupies residues 358-378 (FPIIIGFMLFNDLLTPLECAM). The Cytoplasmic segment spans residues 379 to 453 (QFVMSLISRT…LDYVSEKKKN (75 aa)). E390 is a Zn(2+) binding site. The active-site Proton donor is the D394.

Belongs to the peptidase M48A family. Zn(2+) is required as a cofactor.

It is found in the endoplasmic reticulum membrane. The enzyme catalyses Hydrolyzes the peptide bond -P2-(S-farnesyl or geranylgeranyl)C-P1'-P2'-P3'-COOH where P1' and P2' are amino acids with aliphatic side chains and P3' is any C-terminal residue.. Proteolytically removes the C-terminal three residues of farnesylated A-factor mating pheromone. Also acts to cleave the N-terminal extension of the pheromone. Does not act on Ras. This is CAAX prenyl protease 1 (STE24) from Saccharomyces cerevisiae (strain ATCC 204508 / S288c) (Baker's yeast).